Consider the following 37-residue polypeptide: Cytochrome b6-f complex subunit 5 (37 aa).

The chain crosses the membrane as a helical span at residues 5-25 (LLCGIVLGLIPITLAGLFVAA).

The protein belongs to the PetG family. In terms of assembly, the 4 large subunits of the cytochrome b6-f complex are cytochrome b6, subunit IV (17 kDa polypeptide, PetD), cytochrome f and the Rieske protein, while the 4 small subunits are PetG, PetL, PetM and PetN. The complex functions as a dimer.

Its subcellular location is the cellular thylakoid membrane. In terms of biological role, component of the cytochrome b6-f complex, which mediates electron transfer between photosystem II (PSII) and photosystem I (PSI), cyclic electron flow around PSI, and state transitions. PetG is required for either the stability or assembly of the cytochrome b6-f complex. In Cyanothece sp. (strain PCC 7425 / ATCC 29141), this protein is Cytochrome b6-f complex subunit 5.